The chain runs to 248 residues: tRNA (guanine-N(1)-)-methyltransferase (248 aa).

S-adenosyl-L-methionine-binding positions include G113 and 133-138 (IGDYVL).

Belongs to the RNA methyltransferase TrmD family. In terms of assembly, homodimer.

The protein resides in the cytoplasm. It carries out the reaction guanosine(37) in tRNA + S-adenosyl-L-methionine = N(1)-methylguanosine(37) in tRNA + S-adenosyl-L-homocysteine + H(+). Specifically methylates guanosine-37 in various tRNAs. This Shewanella baltica (strain OS223) protein is tRNA (guanine-N(1)-)-methyltransferase.